Consider the following 398-residue polypeptide: Stearoyl-[acyl-carrier-protein] 9-desaturase, chloroplastic (398 aa).

A chloroplast-targeting transit peptide spans methionine 1–methionine 34. The disordered stretch occupies residues isoleucine 46–serine 66. Glutamate 140, glutamate 178, histidine 181, glutamate 231, glutamate 264, and histidine 267 together coordinate Fe cation.

Belongs to the fatty acid desaturase type 2 family. As to quaternary structure, homodimer. The cofactor is Fe(2+).

Its subcellular location is the plastid. The protein localises to the chloroplast. It carries out the reaction octadecanoyl-[ACP] + 2 reduced [2Fe-2S]-[ferredoxin] + O2 + 2 H(+) = (9Z)-octadecenoyl-[ACP] + 2 oxidized [2Fe-2S]-[ferredoxin] + 2 H2O. Its pathway is lipid metabolism; fatty acid metabolism. Functionally, converts stearoyl-ACP to oleoyl-ACP by introduction of a cis double bond between carbons 9 and 10 of the acyl chain. This chain is Stearoyl-[acyl-carrier-protein] 9-desaturase, chloroplastic, found in Simmondsia chinensis (Jojoba).